We begin with the raw amino-acid sequence, 76 residues long: Conotoxin TsMLCL-03 (76 aa).

The N-terminal stretch at 1-19 is a signal peptide; that stretch reads MLCLPVFIILLLLASPAAP. The propeptide occupies 20–44; that stretch reads NPLERRIQSDLIRTALEDADMKTPK.

This sequence belongs to the conotoxin T superfamily. Post-translationally, contains 2 disulfide bonds that can be either 'C1-C3, C2-C4' or 'C1-C4, C2-C3', since these disulfide connectivities have been observed for conotoxins with cysteine framework V (for examples, see AC P0DQQ7 and AC P81755). In terms of tissue distribution, expressed by the venom duct.

It localises to the secreted. The chain is Conotoxin TsMLCL-03 from Conus tessulatus (Tessellate cone).